A 2564-amino-acid polypeptide reads, in one-letter code: Highly reducing polyketide synthase 40 (2564 aa).

One can recognise a Ketosynthase family 3 (KS3) domain in the interval 8–432 (PEPIAIIGMS…GTNAHVIVDR (425 aa)). Active-site for beta-ketoacyl synthase activity residues include C181, H317, and H358. Residues 435–482 (EHNHSNGTNGTNGTHHHNGTNGSNGNGTNGTNGTNGTDGFHDTESISD) are disordered. A compositionally biased stretch (low complexity) spans 439 to 455 (SNGTNGTNGTHHHNGTN). Residues 473–482 (GFHDTESISD) are compositionally biased toward basic and acidic residues. A malonyl-CoA:ACP transacylase (MAT) domain region spans residues 580–914 (YVFGGQGAQY…SAAENMLRTL (335 aa)). Residues 973–1113 (HELLGNLSAD…GRIRAVVDQG (141 aa)) form an N-terminal hotdog fold region. Positions 973 to 1280 (HELLGNLSAD…GLRTAQLPSD (308 aa)) are dehydratase (DH) domain. Residues 973-1283 (HELLGNLSAD…TAQLPSDVVN (311 aa)) form the PKS/mFAS DH domain. Residue H1005 is the Proton acceptor; for dehydratase activity of the active site. Residues 1130 to 1283 (AASVPHHITS…TAQLPSDVVN (154 aa)) form a C-terminal hotdog fold region. The Proton donor; for dehydratase activity role is filled by D1199. Positions 1451-1556 (LEVGGGTASA…RQLLRPGGTL (106 aa)) are methyltransferase (CMet) domain. The tract at residues 1854-2167 (GLLETFRWVD…AGKHMGKVIL (314 aa)) is enoyl reductase (ER) domain. The ketoreductase (KR) domain stretch occupies residues 2191 to 2370 (ATYLLVGGFG…SFAIDVGVVS (180 aa)). A Carrier domain is found at 2472-2549 (EALDAVGQAV…ELIHLVAGKS (78 aa)). An O-(pantetheine 4'-phosphoryl)serine modification is found at S2509.

It functions in the pathway secondary metabolite biosynthesis. Its function is as follows. Highly reducing polyketide synthase; part of the gene cluster that mediates the biosynthesis of the lipopeptides W493 A and B. W493 A and B consist of six amino acid residues D-allo-thr, L-Ala, D-Ala, L-Gln, D-Tyr, and L-Val/L-Ile linked to a 3-hydroxy-4-methyltetradecanoic acid polyketide chain. The biosynthesis starts with formation of the linear polyketide chain by the highly reducing polyketide synthase PKS40. The gene cluster contains a putative acyl-CoA ligase (FPSE_09184) for formation of a CoA thioester polyketide. The thiol bond could be hydrolyzed by the putative thioesterase (FPSE_09186) and then accepted by the first T domain in module 1 of NRPS32. The second T domain is responsible for accepting a threonine, which is adenylated by the A domain and epimerized to the D-allo-threonine formed by the E domain. The five successive modules incorporate Ala, Ala, Gln, Tyr, and Val/Ile into the final product, which is released by cyclization. This Fusarium pseudograminearum (strain CS3096) (Wheat and barley crown-rot fungus) protein is Highly reducing polyketide synthase 40.